We begin with the raw amino-acid sequence, 435 residues long: Cell adhesion molecule 2 (435 aa).

The signal sequence occupies residues 1–24; the sequence is MIWKRSAVLRFYSVCGLLLQGSQG. Over 25-367 the chain is Extracellular; it reads QFPLTQNVTV…ALAGQNGPDH (343 aa). Residues 27 to 119 enclose the Ig-like V-type domain; that stretch reads PLTQNVTVVE…PVKTSKAYLT (93 aa). N-linked (GlcNAc...) asparagine glycans are attached at residues N31 and N51. Intrachain disulfides connect C44–C104, C146–C203, and C248–C296. 2 Ig-like C2-type domains span residues 127–219 and 227–312; these read PQIS…VAMQ and PSVK…YVLI. N291 carries an N-linked (GlcNAc...) asparagine glycan. The chain crosses the membrane as a helical span at residues 368–388; that stretch reads ALIGGIVAVVVFVTLCSIFLL. The Cytoplasmic segment spans residues 389–435; sequence GRYLARHKGTYLTNEAKGAEDAPDADTAIINAEGSQVNAEEKKEYFI. S423 carries the post-translational modification Phosphoserine.

The protein belongs to the nectin family.

It is found in the cell membrane. Its subcellular location is the synapse. The protein resides in the cell projection. It localises to the axon. Its function is as follows. Adhesion molecule that engages in homo- and heterophilic interactions with the other nectin-like family members, leading to cell aggregation. Important for synapse organization, providing regulated trans-synaptic adhesion. Preferentially binds to oligodendrocytes. Functionally, (Microbial infection) Induces cell fusion in neuron infected by a neuropathogenic strain of measles. Interacts with measles hemagglutinin to trigger hyperfusogenic F-mediated membrane fusion and presumably transsynaptic cell-to-cell transmission of the virus. The sequence is that of Cell adhesion molecule 2 (CADM2) from Homo sapiens (Human).